The primary structure comprises 104 residues: Large ribosomal subunit protein uL24 (104 aa).

It belongs to the universal ribosomal protein uL24 family. Part of the 50S ribosomal subunit.

One of two assembly initiator proteins, it binds directly to the 5'-end of the 23S rRNA, where it nucleates assembly of the 50S subunit. Its function is as follows. One of the proteins that surrounds the polypeptide exit tunnel on the outside of the subunit. The protein is Large ribosomal subunit protein uL24 of Enterobacter sp. (strain 638).